The primary structure comprises 291 residues: N-acetylmannosamine kinase (291 aa).

Residues 5-12 (AIDIGGTK) and 132-139 (GVGGGVVC) each bind ATP. Zn(2+) is bound by residues histidine 156, cysteine 166, cysteine 168, and cysteine 173.

The protein belongs to the ROK (NagC/XylR) family. NanK subfamily. As to quaternary structure, homodimer.

The catalysed reaction is an N-acyl-D-mannosamine + ATP = an N-acyl-D-mannosamine 6-phosphate + ADP + H(+). It participates in amino-sugar metabolism; N-acetylneuraminate degradation; D-fructose 6-phosphate from N-acetylneuraminate: step 2/5. Functionally, catalyzes the phosphorylation of N-acetylmannosamine (ManNAc) to ManNAc-6-P. The sequence is that of N-acetylmannosamine kinase from Salmonella agona (strain SL483).